The following is a 217-amino-acid chain: 3,4-dihydroxy-2-butanone 4-phosphate synthase (217 aa).

D-ribulose 5-phosphate is bound by residues 37–38 (RE), Asp-42, 150–154 (RGGHT), and Glu-174. Glu-38 contributes to the Mg(2+) binding site. Residue His-153 participates in Mg(2+) binding.

It belongs to the DHBP synthase family. As to quaternary structure, homodimer. The cofactor is Mg(2+). It depends on Mn(2+) as a cofactor.

The enzyme catalyses D-ribulose 5-phosphate = (2S)-2-hydroxy-3-oxobutyl phosphate + formate + H(+). It functions in the pathway cofactor biosynthesis; riboflavin biosynthesis; 2-hydroxy-3-oxobutyl phosphate from D-ribulose 5-phosphate: step 1/1. Its function is as follows. Catalyzes the conversion of D-ribulose 5-phosphate to formate and 3,4-dihydroxy-2-butanone 4-phosphate. In Citrobacter koseri (strain ATCC BAA-895 / CDC 4225-83 / SGSC4696), this protein is 3,4-dihydroxy-2-butanone 4-phosphate synthase.